Here is a 230-residue protein sequence, read N- to C-terminus: Type II restriction enzyme Eco47I (230 aa).

It catalyses the reaction Endonucleolytic cleavage of DNA to give specific double-stranded fragments with terminal 5'-phosphates.. Functionally, a P subtype restriction enzyme that recognizes the double-stranded sequence 5'-GGWCC-3' and cleaves after G-1. The chain is Type II restriction enzyme Eco47I from Escherichia coli.